The following is an 81-amino-acid chain: MKTLLLTLVVVTIVCLDLGYTLKCNKLIPIASKTCPAGKNLCYKMFMMSDLTIPVKRGCIDVCPKNSHLVKYVCCNTDRCN.

A signal peptide spans 1–21; it reads MKTLLLTLVVVTIVCLDLGYT. Cystine bridges form between Cys24-Cys42, Cys35-Cys59, Cys63-Cys74, and Cys75-Cys80.

This sequence belongs to the three-finger toxin family. Short-chain subfamily. Type IA cytotoxin sub-subfamily. In terms of assembly, monomer in solution; Homodimer and oligomer in the presence of negatively charged lipids forming a pore with a size ranging between 20 and 30 Angstroms. In terms of tissue distribution, expressed by the venom gland.

It localises to the secreted. The protein resides in the target cell membrane. Functionally, shows cytolytic activity on many different cells by forming pore in lipid membranes. In vivo, increases heart rate or kills the animal by cardiac arrest. In addition, it binds to heparin with high affinity, interacts with Kv channel-interacting protein 1 (KCNIP1) in a calcium-independent manner, and binds to integrin alpha-V/beta-3 (ITGAV/ITGB3) with moderate affinity. This chain is Cytotoxin 1c, found in Naja atra (Chinese cobra).